A 928-amino-acid polypeptide reads, in one-letter code: G-protein coupled receptor family C group 6 member A (928 aa).

Positions 1–20 are cleaved as a signal peptide; that stretch reads MALLITVVTCFMIILDTSQS. At 21–594 the chain is on the extracellular side; the sequence is CHTPDDFVAI…EYLDWDDSLA (574 aa). N-linked (GlcNAc...) asparagine glycans are attached at residues asparagine 332, asparagine 555, and asparagine 567. A helical membrane pass occupies residues 595–615; sequence LLLIALSLLGIAFVLAIGIIF. The Cytoplasmic segment spans residues 616–630; that stretch reads TRNLKTPVVKSSGGL. A helical membrane pass occupies residues 631–651; that stretch reads VVCYVMLICHALNFASTGFFI. The Extracellular portion of the chain corresponds to 652–669; it reads GEPQDFACKTRQTLFGVS. Residues 670–690 form a helical membrane-spanning segment; the sequence is FTLCVSCILTKSLKILLAFSF. Residues 691-706 are Cytoplasmic-facing; it reads DPKLTMFLKCLYRPVP. The helical transmembrane segment at 707–727 threads the bilayer; the sequence is IVLTCTGIQVVICTLWLVLAA. At 728 to 750 the chain is on the extracellular side; the sequence is PSVEENISLPRVIILECEEGSAL. The helical transmembrane segment at 751 to 771 threads the bilayer; that stretch reads AFGTMLGYITVLAFICFVFAF. Over 772–784 the chain is Cytoplasmic; it reads KGRKLPENYNEAK. A helical transmembrane segment spans residues 785-805; the sequence is FLTFGMLIYFIAWITFIPVYT. The Extracellular portion of the chain corresponds to 806-812; it reads TTFGKYL. A helical membrane pass occupies residues 813–833; that stretch reads PAVEIIVILISNYGILCCIFF. At 834-928 the chain is on the cytoplasmic side; it reads PKCYIILCKQ…TLRQKRSSSI (95 aa).

This sequence belongs to the G-protein coupled receptor 3 family. Homodimer; disulfide-linked. Post-translationally, N-glycosylated. As to expression, expressed at high level in liver, lung, spleen and heart. Expressed at lower level in kidney, skeletal muscle and brain. Expressed in 7 dpc, 11 dpc, 15 dpc and 17 dpc embryos.

Its subcellular location is the cell membrane. Functionally, receptor activated by multiple ligands, including osteocalcin (BGLAP), basic amino acids, and various cations. Activated by amino acids with a preference for basic amino acids such as L-Lys, L-Arg and L-ornithine but also by small and polar amino acids. The L-alpha amino acids respond is augmented by divalent cations Ca(2+) and Mg(2+). Seems to act through a G(q)/G(11) and G(i)-coupled pathway. Regulates testosterone production by acting as a ligand for uncarboxylated osteocalcin hormone: osteocalcin-binding at the surface of Leydig cells initiates a signaling response that promotes the expression of enzymes required for testosterone synthesis in a CREB-dependent manner. Mediates the non-genomic effects of androgens in multiple tissue. May coordinate nutritional and hormonal anabolic signals through the sensing of extracellular amino acids, osteocalcin, divalent ions and its responsiveness to anabolic steroids. This chain is G-protein coupled receptor family C group 6 member A (Gprc6a), found in Mus musculus (Mouse).